Consider the following 188-residue polypeptide: Ribosome maturation factor RimM (188 aa).

One can recognise a PRC barrel domain in the interval 93 to 166; sequence EDEYYDHQLI…RAVIDPPPGL (74 aa).

This sequence belongs to the RimM family. Binds ribosomal protein uS19.

Its subcellular location is the cytoplasm. Functionally, an accessory protein needed during the final step in the assembly of 30S ribosomal subunit, possibly for assembly of the head region. Essential for efficient processing of 16S rRNA. May be needed both before and after RbfA during the maturation of 16S rRNA. It has affinity for free ribosomal 30S subunits but not for 70S ribosomes. This Streptomyces coelicolor (strain ATCC BAA-471 / A3(2) / M145) protein is Ribosome maturation factor RimM.